A 234-amino-acid chain; its full sequence is Sugar fermentation stimulation protein homolog (234 aa).

This sequence belongs to the SfsA family.

The polypeptide is Sugar fermentation stimulation protein homolog (Shewanella baltica (strain OS223)).